Consider the following 323-residue polypeptide: Cyclin-D5-1 (323 aa).

Disordered regions lie at residues 17–36 (ESSL…KQEP) and 281–323 (HMTP…MRRL).

Belongs to the cyclin family. Cyclin D subfamily.

This Arabidopsis thaliana (Mouse-ear cress) protein is Cyclin-D5-1 (CYCD5-1).